A 107-amino-acid chain; its full sequence is Growth-regulated alpha protein (107 aa).

A signal peptide spans 1–34 (MARAALSAAPSNPRLLRVALLLLLLVAAGRRAAG). Disulfide bonds link Cys43-Cys69 and Cys45-Cys85.

Belongs to the intercrine alpha (chemokine CxC) family. In terms of processing, N-terminal processed forms GRO-alpha(4-73), GRO-alpha(5-73) and GRO-alpha(6-73) are produced by proteolytic cleavage after secretion from peripheral blood monocytes.

The protein localises to the secreted. Has chemotactic activity for neutrophils. May play a role in inflammation and exerts its effects on endothelial cells in an autocrine fashion. In vitro, the processed forms GRO-alpha(4-73), GRO-alpha(5-73) and GRO-alpha(6-73) show a 30-fold higher chemotactic activity. The chain is Growth-regulated alpha protein (CXCL1) from Homo sapiens (Human).